The chain runs to 181 residues: Adenylate kinase (181 aa).

7 to 15 (GVAGVGKTT) contributes to the ATP binding site.

The protein belongs to the archaeal adenylate kinase family.

It is found in the cytoplasm. The catalysed reaction is AMP + ATP = 2 ADP. The protein is Adenylate kinase (adkA) of Thermoplasma volcanium (strain ATCC 51530 / DSM 4299 / JCM 9571 / NBRC 15438 / GSS1).